The primary structure comprises 345 residues: Serpentine receptor class beta-5 (345 aa).

Residues Met1–Arg22 are Extracellular-facing. N-linked (GlcNAc...) asparagine glycosylation occurs at Asn5. A helical transmembrane segment spans residues Leu23 to Leu43. At Leu44–Lys57 the chain is on the cytoplasmic side. A helical membrane pass occupies residues Cys58 to Phe78. Topologically, residues Ser79–Cys103 are extracellular. The helical transmembrane segment at Gly104–Ile124 threads the bilayer. Residues Glu125–Leu142 lie on the Cytoplasmic side of the membrane. The chain crosses the membrane as a helical span at residues Leu143–Phe163. Residues Arg164–Tyr189 are Extracellular-facing. The helical transmembrane segment at Leu190 to Phe210 threads the bilayer. The Cytoplasmic portion of the chain corresponds to His211–Thr241. A helical transmembrane segment spans residues Leu242 to Val262. Topologically, residues Arg263 to Arg280 are extracellular. Residues Gly281–Leu301 form a helical membrane-spanning segment. Topologically, residues Arg302–Arg345 are cytoplasmic.

Belongs to the nematode receptor-like protein srb family. As to expression, expressed throughout the head.

It localises to the cell membrane. It is found in the perikaryon. The protein resides in the cell projection. Its subcellular location is the dendrite. In terms of biological role, G-protein coupled receptor. Plays a role in the navigational capacity of sperm and promotes the targeting of sperm derived from males to the fertilization site in the uterus of hermaphrodites. The polypeptide is Serpentine receptor class beta-5 (Caenorhabditis elegans).